The following is a 297-amino-acid chain: Pyrroline-5-carboxylate reductase 1 (297 aa).

It belongs to the pyrroline-5-carboxylate reductase family.

The protein resides in the cytoplasm. It carries out the reaction L-proline + NADP(+) = (S)-1-pyrroline-5-carboxylate + NADPH + 2 H(+). The enzyme catalyses L-proline + NAD(+) = (S)-1-pyrroline-5-carboxylate + NADH + 2 H(+). The protein operates within amino-acid biosynthesis; L-proline biosynthesis; L-proline from L-glutamate 5-semialdehyde: step 1/1. In terms of biological role, catalyzes the reduction of 1-pyrroline-5-carboxylate (PCA) to L-proline. The chain is Pyrroline-5-carboxylate reductase 1 (proH) from Bacillus spizizenii (strain ATCC 23059 / NRRL B-14472 / W23) (Bacillus subtilis subsp. spizizenii).